Consider the following 1424-residue polypeptide: Serine/threonine-protein kinase LMTK3 (1424 aa).

The first 20 residues, 1–20, serve as a signal peptide directing secretion; the sequence is MPAPGALILLAAVSASGCLA. Residues 40 to 60 traverse the membrane as a helical segment; that stretch reads AVVLISCSGLLAFIFLLLTCL. The interval 74–95 is disordered; the sequence is NPEGEDCSGEYTPPAEETSSSQ. Residues 133 to 411 form the Protein kinase domain; sequence LSYLQEIGSG…SDLQLQLTYL (279 aa). Residues 139-147 and K164 each bind ATP; that span reads IGSGWFGKV. The residue at position 232 (S232) is a Phosphoserine. Catalysis depends on D266, which acts as the Proton acceptor. 2 disordered regions span residues 413–465 and 486–516; these read SERP…PDDV and RGAG…PFYE. Residues 418-439 are compositionally biased toward pro residues; it reads RPPPPPPPPRDGPFPWPWPPSH. An Omega-N-methylarginine modification is found at R490. Positions 496–507 are enriched in pro residues; the sequence is PWQPASAPPAPH. 2 positions are modified to phosphoserine: S531 and S535. Disordered regions lie at residues 544 to 666, 680 to 964, 976 to 1024, 1041 to 1313, and 1325 to 1424; these read EHGS…PLPC, LERG…MSPE, MSPK…APET, GLEM…RKRK, and LFDQ…PVEN. Residues 571-584 are compositionally biased toward polar residues; that stretch reads QTPSEVPQLVSETW. Acidic residues predominate over residues 638-647; sequence AEEEEEESSP. The segment covering 700–713 has biased composition (basic and acidic residues); that stretch reads PPEDDSSLRAERGS. A compositionally biased stretch (pro residues) spans 744-758; the sequence is RGPPPAPPPPPPPPR. Over residues 759-791 the composition is skewed to low complexity; that stretch reads ASAEPAASPDPPSALASPGSGLSSPGPKPGDSG. Residues 818 to 841 show a composition bias toward pro residues; that stretch reads PRAPPEPPDPGAPRPPPDPGPLPL. Residues 935-954 show a composition bias toward basic and acidic residues; the sequence is DMKEKVAENGLESPEKEERA. Residues S947, S962, and S977 each carry the phosphoserine modification. Residues 994–1004 show a composition bias toward basic and acidic residues; the sequence is RNTERPPEIGP. Over residues 1084–1094 the composition is skewed to gly residues; sequence GSGGRALGGVG. A compositionally biased stretch (low complexity) spans 1095–1105; sequence TAPAGGPASAV. Basic and acidic residues predominate over residues 1167–1177; it reads DPLKPERKGPE. Over residues 1200 to 1213 the composition is skewed to low complexity; it reads SRLSLALPPLTLTP. A compositionally biased stretch (gly residues) spans 1231 to 1241; the sequence is AAGGEAGGAGA. Over residues 1245–1261 the composition is skewed to acidic residues; that stretch reads AEEDGEDEDEDEEDEEA. Positions 1262-1272 are enriched in basic and acidic residues; it reads AGSRDPGRTRE. A compositionally biased stretch (polar residues) spans 1329–1339; sequence ETPTNELSVQG. Over residues 1348-1360 the composition is skewed to pro residues; it reads STPPAPPTPPHPT.

Belongs to the protein kinase superfamily. Tyr protein kinase family. As to quaternary structure, interacts with ESR1. Interacts with AP-2 complex subunit alpha. It depends on Mg(2+) as a cofactor. Post-translationally, autophosphorylated. Expressed in brain. Predominantly expressed in cerebral cortex, thalamus, the cerebellum and hippocampal formation (at protein level).

It is found in the membrane. Its subcellular location is the cell projection. The protein localises to the axon. It localises to the dendrite. The protein resides in the golgi apparatus membrane. The catalysed reaction is L-seryl-[protein] + ATP = O-phospho-L-seryl-[protein] + ADP + H(+). It catalyses the reaction L-threonyl-[protein] + ATP = O-phospho-L-threonyl-[protein] + ADP + H(+). Protein kinase which phosphorylates ESR1 (in vitro) and protects it against proteasomal degradation. May also regulate ESR1 levels indirectly via a PKC-AKT-FOXO3 pathway where it decreases the activity of PKC and the phosphorylation of AKT, thereby increasing binding of transcriptional activator FOXO3 to the ESR1 promoter and increasing ESR1 transcription. Involved in endocytic trafficking of N-methyl-D-aspartate receptors (NMDAR) in neurons. The chain is Serine/threonine-protein kinase LMTK3 (Lmtk3) from Mus musculus (Mouse).